Here is a 394-residue protein sequence, read N- to C-terminus: Aromatic aminotransferase ISS1 (394 aa).

Glycine 2 carries the N-acetylglycine modification. Position 38 (glycine 38) interacts with substrate. Residues tyrosine 64, 98–99 (AN), tyrosine 123, asparagine 176, tyrosine 207, and 230–232 (SFS) each bind pyridoxal 5'-phosphate. Substrate is bound by residues tyrosine 123 and asparagine 176. An N6-(pyridoxal phosphate)lysine modification is found at lysine 233. Arginine 241 lines the pyridoxal 5'-phosphate pocket. Arginine 362 and arginine 374 together coordinate substrate.

Belongs to the class-I pyridoxal-phosphate-dependent aminotransferase family. As to quaternary structure, homodimer. Requires pyridoxal 5'-phosphate as cofactor. Expressed in roots, cotyledons and flowers.

It is found in the cytoplasm. It catalyses the reaction a 2-oxocarboxylate + L-methionine = 4-methylsulfanyl-2-oxobutanoate + an L-alpha-amino acid. The catalysed reaction is L-tryptophan + 2-oxoglutarate = indole-3-pyruvate + L-glutamate. It carries out the reaction L-tyrosine + 2-oxoglutarate = 3-(4-hydroxyphenyl)pyruvate + L-glutamate. In terms of biological role, coordinates and prevents auxin (IAA) and ethylene biosynthesis, thus regulating auxin homeostasis in young seedlings. Shows aminotransferase activity with methionine; can use the ethylene biosynthetic intermediate L-methionine (L-Met) as an amino donor and the auxin biosynthetic intermediate, indole-3-pyruvic acid (3-IPA) as an amino acceptor to produce L-tryptophan (L-Trp) and 2-oxo-4-methylthiobutyric acid (KMBA). Can also use tryptophan (Trp), phenylalanine (Phe), and tyrosine (Tyr) as substrates. Regulates tryptophan (Trp) homeostasis and catabolism in mature plants. Also possibly involved in the metabolism of other aromatic amino acids and phenylpropanoid homeostasis. The chain is Aromatic aminotransferase ISS1 from Arabidopsis thaliana (Mouse-ear cress).